Here is a 490-residue protein sequence, read N- to C-terminus: Probable alcohol acetyltransferase FCK4 (490 aa).

It belongs to the alcohol acetyltransferase FCK4 family.

It functions in the pathway secondary metabolite biosynthesis. Probable alcohol acetyltransferase; part of the gene cluster that mediates the biosynthesis of cytokinins such as fusatin, fusatinic acids or 8-oxofusatin, known for their growth promoting and anti-senescence activities toward host plants. FCK1 is a bifunctional enzyme that performs the first steps in the biosynthesis of Fusarium cytokinins. It first condenses adenosine monophosphate (AMP) with dimethylallyl diphosphate (DMAPP) to yield isoprenyl adenosine monophosphate. It then catalyzes the removal of the phosphoribose to produce isopentenylaldehyde. The cytochrome P450 monooxygenase then converts isopentenylaldehyde to trans-zeatin. A condensation step converts trans-zeatin to fusatin which is further modified to produce fusatinic acid. The mechanism for oxidation of fusatin to fusatinic acid remains unknown. 8-oxofusatin could be produced through several pathways, via direct oxygenation of fusatin, or via the 8-oxo-pentenyladenine intermediate which itself must arise from either the prenylation of 8-oxo-AMP by FCK1 and/or oxygenation of isopentenylaldehyde. Both the FCK3 and FCK4 enzymes act downstream of the identified cytokinins to produce yet unidentified compounds. This is Probable alcohol acetyltransferase FCK4 from Fusarium pseudograminearum (strain CS3096) (Wheat and barley crown-rot fungus).